The sequence spans 103 residues: MAAQQDIRIKLKSYDHTLIDKSAEKIIRTVKSTGAVVSGPVPLPTEKKIYTVLRGPHVDKKSREQFERRHHKRLIDILSSSSDTVDSLMQLELPSGVDVEIKV.

Belongs to the universal ribosomal protein uS10 family. In terms of assembly, part of the 30S ribosomal subunit.

Functionally, involved in the binding of tRNA to the ribosomes. In Salinibacter ruber (strain DSM 13855 / M31), this protein is Small ribosomal subunit protein uS10.